Here is a 394-residue protein sequence, read N- to C-terminus: Obg-like ATPase 1 (394 aa).

The region spanning 21–285 (LKAGIVGLAN…MSPEDAEEEL (265 aa)) is the OBG-type G domain. 30–35 (NVGKST) is an ATP binding site. Residues Ser34 and Thr55 each coordinate Mg(2+). Thr89 is subject to Phosphothreonine. Residue Lys98 forms a Glycyl lysine isopeptide (Lys-Gly) (interchain with G-Cter in ubiquitin) linkage. Phosphoserine is present on residues Ser116 and Ser119. Residue Leu233 participates in ATP binding. The 84-residue stretch at 306-389 (DLISFFTCGP…EDGDIIYFRA (84 aa)) folds into the TGS domain.

This sequence belongs to the TRAFAC class OBG-HflX-like GTPase superfamily. OBG GTPase family. YchF/OLA1 subfamily. Monomer. Interacts with the 26S proteasome subunit RPT6. It depends on Mg(2+) as a cofactor.

The protein localises to the cytoplasm. Functionally, hydrolyzes ATP, and can also hydrolyze GTP with lower efficiency. Has lower affinity for GTP. The sequence is that of Obg-like ATPase 1 from Saccharomyces cerevisiae (strain ATCC 204508 / S288c) (Baker's yeast).